A 146-amino-acid polypeptide reads, in one-letter code: Linear conopeptide (146 aa).

A signal peptide spans 1–19; it reads MLRLIIAAAVLVSACLAYP. A propeptide spanning residues 20 to 34 is cleaved from the precursor; it reads QRREGAPADAANLQS. Methionine 40 is modified (methionine sulfoxide; partial; in Cn2). Propeptides lie at residues 58–80 and 104–146; these read FLPF…LEKR and FLHN…DKEQ. Residues 107-146 form a disordered region; the sequence is NEKGDKHPFANVDSADTDLGQFEPSAENKNGEFRFFDKEQ. Basic and acidic residues predominate over residues 135 to 146; sequence KNGEFRFFDKEQ.

As to expression, expressed by the venom duct.

It localises to the secreted. The sequence is that of Linear conopeptide from Conus consors (Singed cone).